Here is a 201-residue protein sequence, read N- to C-terminus: UPF0637 protein LSEI_1198 (201 aa).

Belongs to the UPF0637 family.

The polypeptide is UPF0637 protein LSEI_1198 (Lacticaseibacillus paracasei (strain ATCC 334 / BCRC 17002 / CCUG 31169 / CIP 107868 / KCTC 3260 / NRRL B-441) (Lactobacillus paracasei)).